The sequence spans 1062 residues: Carbamoyl phosphate synthase large chain (1062 aa).

The segment at Met1–Glu401 is carboxyphosphate synthetic domain. ATP is bound by residues Arg129, Arg169, Gly175, Gly176, Lys208, Ile210, Glu215, Gly241, Ile242, His243, Gln284, and Glu298. The ATP-grasp 1 domain maps to Lys133–Ile327. Mg(2+) contacts are provided by Gln284, Glu298, and Asn300. Residues Gln284, Glu298, and Asn300 each coordinate Mn(2+). Residues Ile402–Ser546 form an oligomerization domain region. Positions Arg547–Lys929 are carbamoyl phosphate synthetic domain. Residues Asp671–Met861 form the ATP-grasp 2 domain. 10 residues coordinate ATP: Arg707, Asp746, Leu748, Glu752, Gly777, Val778, His779, Ser780, Gln820, and Glu832. Mg(2+) is bound by residues Gln820, Glu832, and Asn834. Mn(2+) contacts are provided by Gln820, Glu832, and Asn834. The MGS-like domain maps to Met930–Lys1062. Residues Met930–Lys1062 are allosteric domain.

The protein belongs to the CarB family. In terms of assembly, composed of two chains; the small (or glutamine) chain promotes the hydrolysis of glutamine to ammonia, which is used by the large (or ammonia) chain to synthesize carbamoyl phosphate. Tetramer of heterodimers (alpha,beta)4. Mg(2+) is required as a cofactor. Requires Mn(2+) as cofactor.

The catalysed reaction is hydrogencarbonate + L-glutamine + 2 ATP + H2O = carbamoyl phosphate + L-glutamate + 2 ADP + phosphate + 2 H(+). The enzyme catalyses hydrogencarbonate + NH4(+) + 2 ATP = carbamoyl phosphate + 2 ADP + phosphate + 2 H(+). It participates in amino-acid biosynthesis; L-arginine biosynthesis; carbamoyl phosphate from bicarbonate: step 1/1. The protein operates within pyrimidine metabolism; UMP biosynthesis via de novo pathway; (S)-dihydroorotate from bicarbonate: step 1/3. Functionally, large subunit of the glutamine-dependent carbamoyl phosphate synthetase (CPSase). CPSase catalyzes the formation of carbamoyl phosphate from the ammonia moiety of glutamine, carbonate, and phosphate donated by ATP, constituting the first step of 2 biosynthetic pathways, one leading to arginine and/or urea and the other to pyrimidine nucleotides. The large subunit (synthetase) binds the substrates ammonia (free or transferred from glutamine from the small subunit), hydrogencarbonate and ATP and carries out an ATP-coupled ligase reaction, activating hydrogencarbonate by forming carboxy phosphate which reacts with ammonia to form carbamoyl phosphate. The sequence is that of Carbamoyl phosphate synthase large chain from Lactobacillus helveticus (strain DPC 4571).